The sequence spans 120 residues: U13-barytoxin-Tl1a (120 aa).

An N-terminal signal peptide occupies residues 1–20 (MKTIIVFLSLLVLATKFGDA). Disulfide bonds link Cys75-Cys90, Cys82-Cys95, and Cys89-Cys109.

Belongs to the neurotoxin 14 (magi-1) family. 05 (ICK-7) subfamily. ICK-7 sub-subfamily. Expressed by the venom gland.

Its subcellular location is the secreted. Ion channel inhibitor. This Trittame loki (Brush-footed trapdoor spider) protein is U13-barytoxin-Tl1a.